The chain runs to 614 residues: Vitamin B12 transporter BtuB (614 aa).

A signal peptide spans methionine 1–alanine 20. The TonB box signature appears at aspartate 26–asparagine 33. The TBDR plug domain occupies proline 38 to threonine 152. Residues leucine 83, serine 85, asparagine 92, and valine 110–serine 111 each bind cyanocob(III)alamin. The TBDR beta-barrel domain occupies glutamate 155–phenylalanine 614. 3 beta stranded membrane-spanning segments follow: residues threonine 158–glycine 165, tyrosine 169–glutamine 178, and threonine 184–threonine 195. Residues aspartate 199, glutamine 211, aspartate 213, and aspartate 215 each contribute to the Ca(2+) site. A run of 2 beta stranded transmembrane segments spans residues phenylalanine 217–glutamate 227 and aspartate 232–asparagine 248. Ca(2+) contacts are provided by tyrosine 249 and aspartate 250. Alanine 251 lines the cyanocob(III)alamin pocket. A Ca(2+)-binding site is contributed by aspartate 261. The next 14 membrane-spanning stretches (beta stranded) occupy residues arginine 263–asparagine 277, glutamate 279–asparagine 296, threonine 309–isoleucine 325, histidine 328–tryptophan 337, tyrosine 353–glycine 369, phenylalanine 371–aspartate 381, phenylalanine 385–isoleucine 400, tyrosine 403–asparagine 417, lysine 434–glutamate 443, valine 449–asparagine 458, tyrosine 473–phenylalanine 490, proline 494–alanine 509, arginine 517–tryptophan 529, and aspartate 535–aspartate 550. A cyanocob(III)alamin-binding site is contributed by threonine 309. Arginine 517 contacts cyanocob(III)alamin. Residue tyrosine 551 coordinates cyanocob(III)alamin. The next 3 membrane-spanning stretches (beta stranded) occupy residues threonine 558–alanine 572, isoleucine 585–valine 596, and alanine 602–phenylalanine 614. The short motif at tyrosine 597–phenylalanine 614 is the TonB C-terminal box element.

It belongs to the TonB-dependent receptor family. BtuB (TC 1.B.14.3.1) subfamily.

The protein localises to the cell outer membrane. Its function is as follows. Involved in the active translocation of vitamin B12 (cyanocobalamin) across the outer membrane to the periplasmic space. It derives its energy for transport by interacting with the trans-periplasmic membrane protein TonB. This Escherichia coli O139:H28 (strain E24377A / ETEC) protein is Vitamin B12 transporter BtuB.